The following is a 111-amino-acid chain: MEASAILRGARVSPQKARLVAAQVRGLSADSAVNLLRFSSKKAACLIKKVVESAIANAENNHGSNIDDLRINTIIVDEGRMLKRFMARAKGRSSRIVKRSSHITVVVGPAK.

It belongs to the universal ribosomal protein uL22 family. As to quaternary structure, part of the 50S ribosomal subunit.

In terms of biological role, this protein binds specifically to 23S rRNA; its binding is stimulated by other ribosomal proteins, e.g. L4, L17, and L20. It is important during the early stages of 50S assembly. It makes multiple contacts with different domains of the 23S rRNA in the assembled 50S subunit and ribosome. The globular domain of the protein is located near the polypeptide exit tunnel on the outside of the subunit, while an extended beta-hairpin is found that lines the wall of the exit tunnel in the center of the 70S ribosome. This is Large ribosomal subunit protein uL22 from Xylella fastidiosa (strain M23).